The chain runs to 1454 residues: Serine/threonine-protein kinase VPS15 (1454 aa).

Residue glycine 2 is the site of N-myristoyl glycine attachment. A Protein kinase domain is found at 27–300 (VHYVSQLNSS…LLNKYRGIFF (274 aa)). Residues 33-41 (LNSSRFLKT) and lysine 54 each bind ATP. The Proton acceptor role is filled by aspartate 147. 4 HEAT repeats span residues 460–497 (NKID…SVRK), 576–613 (KLIQ…FFGR), 615–652 (RTND…LLGT), and 654–691 (TLEQ…TGLI). WD repeat units follow at residues 1078–1118 (NEPN…VGEV), 1126–1165 (DCSS…QESE), 1229–1268 (PRHG…LIRS), 1275–1315 (APIT…CQYA), 1344–1382 (RSLN…SSKA), and 1422–1454 (YHHD…GIFQ).

It belongs to the protein kinase superfamily. Ser/Thr protein kinase family. Component of the autophagy-specific VPS34 PI3-kinase complex I composed of VPS15, VPS30, VPS34, ATG14 and ATG38; and of the VPS34 PI3-kinase complex II composed of VPS15, VPS30, VPS34 and VPS38. Interacts directly with ATG14 and GPA1. Interacts directly with VPS34. Post-translationally, autophosphorylated.

Its subcellular location is the golgi apparatus. The protein localises to the trans-Golgi network membrane. It is found in the endosome membrane. It carries out the reaction L-seryl-[protein] + ATP = O-phospho-L-seryl-[protein] + ADP + H(+). The catalysed reaction is L-threonyl-[protein] + ATP = O-phospho-L-threonyl-[protein] + ADP + H(+). Serine/threonine-protein kinase required for cytoplasm to vacuole transport (Cvt) and autophagy as a part of the autophagy-specific VPS34 PI3-kinase complex I. This complex is essential to recruit the ATG8-phosphatidylinositol conjugate and the ATG12-ATG5 conjugate to the pre-autophagosomal structure. Is also involved in endosome-to-Golgi retrograde transport as part of the VPS34 PI3-kinase complex II. This second complex is required for the endosome-to-Golgi retrieval of PEP1 and KEX2, and the recruitment of VPS5 and VPS7, two components of the retromer complex, to endosomal membranes (probably through the synthesis of a specific pool of phosphatidylinositol 3-phosphate recruiting the retromer to the endosomes). By regulating VPS34 kinase activity, VPS15 appears to be essential for the efficient delivery of soluble hydrolases to the yeast vacuole. May function as a G protein beta subunit to propagate the pheromone response at the endosome with GPA1. The protein is Serine/threonine-protein kinase VPS15 of Saccharomyces cerevisiae (strain ATCC 204508 / S288c) (Baker's yeast).